The primary structure comprises 482 residues: Adenylosuccinate lyase (482 aa).

Substrate is bound by residues 14 to 15 (RY), 82 to 84 (RHD), and 108 to 109 (TS). The active-site Proton donor/acceptor is histidine 156. Glutamine 238 contributes to the substrate binding site. Serine 286 (proton donor/acceptor) is an active-site residue. Arginine 300, arginine 326, serine 331, and arginine 335 together coordinate substrate.

The protein belongs to the lyase 1 family. Adenylosuccinate lyase subfamily. As to quaternary structure, homotetramer. Residues from neighboring subunits contribute catalytic and substrate-binding residues to each active site.

The catalysed reaction is N(6)-(1,2-dicarboxyethyl)-AMP = fumarate + AMP. It carries out the reaction (2S)-2-[5-amino-1-(5-phospho-beta-D-ribosyl)imidazole-4-carboxamido]succinate = 5-amino-1-(5-phospho-beta-D-ribosyl)imidazole-4-carboxamide + fumarate. Its pathway is purine metabolism; AMP biosynthesis via de novo pathway; AMP from IMP: step 2/2. It functions in the pathway purine metabolism; IMP biosynthesis via de novo pathway; 5-amino-1-(5-phospho-D-ribosyl)imidazole-4-carboxamide from 5-amino-1-(5-phospho-D-ribosyl)imidazole-4-carboxylate: step 2/2. This Schizosaccharomyces pombe (strain 972 / ATCC 24843) (Fission yeast) protein is Adenylosuccinate lyase (ade8).